The following is a 202-amino-acid chain: Nucleoside triphosphate pyrophosphatase (202 aa).

Catalysis depends on D79, which acts as the Proton acceptor.

This sequence belongs to the Maf family. The cofactor is a divalent metal cation.

The protein localises to the cytoplasm. It catalyses the reaction a ribonucleoside 5'-triphosphate + H2O = a ribonucleoside 5'-phosphate + diphosphate + H(+). The enzyme catalyses a 2'-deoxyribonucleoside 5'-triphosphate + H2O = a 2'-deoxyribonucleoside 5'-phosphate + diphosphate + H(+). Functionally, nucleoside triphosphate pyrophosphatase. May have a dual role in cell division arrest and in preventing the incorporation of modified nucleotides into cellular nucleic acids. This chain is Nucleoside triphosphate pyrophosphatase, found in Rhodopseudomonas palustris (strain BisB18).